Reading from the N-terminus, the 462-residue chain is Elongation factor 1-alpha (462 aa).

G2 is modified (n,N,N-trimethylglycine). The residue at position 3 (K3) is an N6,N6-dimethyllysine; alternate. K3 is subject to N6-methyllysine; alternate. The tr-type G domain maps to 5–242 (KAHVNVVVIG…DAIEPPVRPS (238 aa)). A G1 region spans residues 14-21 (GHVDSGKS). 14–21 (GHVDSGKS) is a binding site for GTP. Position 30 is an N6-methyllysine (K30). Positions 70–74 (GITID) are G2. An N6,N6,N6-trimethyllysine modification is found at K79. The segment at 91–94 (DAPG) is G3. Residues 91-95 (DAPGH) and 153-156 (NKMD) contribute to the GTP site. The segment at 153-156 (NKMD) is G4. A G5 region spans residues 192–194 (SGW). At K318 the chain carries N6,N6-dimethyllysine; alternate. N6-methyllysine; alternate is present on K318. An N6-methyllysine modification is found at K392.

It belongs to the TRAFAC class translation factor GTPase superfamily. Classic translation factor GTPase family. EF-Tu/EF-1A subfamily.

It is found in the cytoplasm. In terms of biological role, this protein promotes the GTP-dependent binding of aminoacyl-tRNA to the A-site of ribosomes during protein biosynthesis. The protein is Elongation factor 1-alpha (TEF1) of Serendipita indica (Root endophyte fungus).